Here is a 425-residue protein sequence, read N- to C-terminus: Metacaspase-1 (425 aa).

Residues 1 to 110 form a disordered region; the sequence is MSYNSNPYNG…PQLPNTQTQS (110 aa). Positions 13-28 are enriched in low complexity; the sequence is YPPYNTYTRPNYSPNN. Polar residues-rich tracts occupy residues 29-38 and 88-110; these read GSQSNNTVHQ and TGANSYGNPNYSGPQLPNTQTQS. Residues histidine 214 and cysteine 270 contribute to the active site.

It belongs to the peptidase C14B family.

It localises to the cytoplasm. The protein resides in the nucleus. Its function is as follows. Involved in cell death (apoptosis). In Schizosaccharomyces pombe (strain 972 / ATCC 24843) (Fission yeast), this protein is Metacaspase-1 (pca1).